Here is a 163-residue protein sequence, read N- to C-terminus: Nucleotide-binding protein YajQ (163 aa).

Belongs to the YajQ family.

Functionally, nucleotide-binding protein. This Salmonella typhi protein is Nucleotide-binding protein YajQ.